The chain runs to 1544 residues: Lysophospholipase NTE1 (1544 aa).

The Cytoplasmic portion of the chain corresponds to 1-37; it reads MSTIEIVSTVAEYTEIHSPVSSKFLLPSARDSSSSIS. Residues 38–58 traverse the membrane as a helical segment; it reads LFSAIFWFWSWLFFKIMNIFL. Residues 59–76 are Lumenal-facing; sequence YYIPNIIVNLFSVNFQIT. The chain crosses the membrane as a helical span at residues 77-97; it reads LSLSSIVITLTGIISFCFLIV. At 98–1544 the chain is on the cytoplasmic side; sequence RYKYLTRYSK…RKSLYRRSSI (1447 aa). 2 disordered regions span residues 265 to 312 and 424 to 552; these read RLFS…RNYP and ESPS…EETE. Positions 275 to 310 are enriched in polar residues; it reads NPASNPLSPDNTGSKSFDPLSSGNFNDTSLSSSDRN. Over residues 425–447 the composition is skewed to low complexity; the sequence is SPSVSINKTSSSSSSLPKKSTTS. Polar residues-rich tracts occupy residues 448–458 and 517–536; these read LRPLNRNQSSR and QISS…TTKF. Positions 537–546 are enriched in basic and acidic residues; the sequence is ENIRDRTFSD. A nucleoside 3',5'-cyclic phosphate-binding positions include 681–811 and 807–960; these read SFES…LKSL and KLKS…VANK. The region spanning 1237–1401 is the PNPLA domain; sequence LVLGGGGSRG…LDNLPVMEMK (165 aa). The GXGXXG motif lies at 1241 to 1246; that stretch reads GGGSRG. Residues 1268 to 1272 carry the GXSXG motif; it reads GTSIG. Ser1270 (nucleophile) is an active-site residue. Asp1388 serves as the catalytic Proton acceptor. Residues 1388-1390 carry the DGA/G motif; the sequence is DGG.

Belongs to the NTE family.

It localises to the endoplasmic reticulum membrane. It carries out the reaction a 1-acyl-sn-glycero-3-phosphocholine + H2O = sn-glycerol 3-phosphocholine + a fatty acid + H(+). Its activity is regulated as follows. Inhibited by organophosphorus esters. Functionally, intracellular phospholipase B that catalyzes the double deacylation of phosphatidylcholine (PC) to glycerophosphocholine (GroPCho). Plays an important role in membrane lipid homeostasis. Responsible for the rapid PC turnover in response to inositol, elevated temperatures, or when choline is present in the growth medium. This Debaryomyces hansenii (strain ATCC 36239 / CBS 767 / BCRC 21394 / JCM 1990 / NBRC 0083 / IGC 2968) (Yeast) protein is Lysophospholipase NTE1 (NTE1).